A 433-amino-acid chain; its full sequence is Adenylyltransferase and sulfurtransferase UBA4 (433 aa).

ATP contacts are provided by residues Gly70, Asp91, 98–102 (SNLHR), Lys115, and 159–160 (DT). Zn(2+) contacts are provided by Cys201 and Cys204. Cys218 acts as the Glycyl thioester intermediate; for adenylyltransferase activity in catalysis. Zn(2+) contacts are provided by Cys279 and Cys282. In terms of domain architecture, Rhodanese spans 332–431 (SGNNKVLLDV…YIDDVDQSIP (100 aa)). The active-site Cysteine persulfide intermediate; for sulfurtransferase activity is Cys390.

This sequence in the N-terminal section; belongs to the HesA/MoeB/ThiF family. UBA4 subfamily. Zn(2+) serves as cofactor.

It is found in the cytoplasm. The protein resides in the cytosol. It participates in tRNA modification; 5-methoxycarbonylmethyl-2-thiouridine-tRNA biosynthesis. In terms of biological role, plays a central role in 2-thiolation of mcm(5)S(2)U at tRNA wobble positions of cytosolic tRNA(Lys), tRNA(Glu) and tRNA(Gln). Acts by mediating the C-terminal thiocarboxylation of sulfur carrier URM1. Its N-terminus first activates URM1 as acyl-adenylate (-COAMP), then the persulfide sulfur on the catalytic cysteine is transferred to URM1 to form thiocarboxylation (-COSH) of its C-terminus. The reaction probably involves hydrogen sulfide that is generated from the persulfide intermediate and that acts as a nucleophile towards URM1. Subsequently, a transient disulfide bond is formed. Does not use thiosulfate as sulfur donor; NFS1 probably acting as a sulfur donor for thiocarboxylation reactions. Prior mcm(5) tRNA modification by the elongator complex is required for 2-thiolation. May also be involved in protein urmylation. The polypeptide is Adenylyltransferase and sulfurtransferase UBA4 (Candida glabrata (strain ATCC 2001 / BCRC 20586 / JCM 3761 / NBRC 0622 / NRRL Y-65 / CBS 138) (Yeast)).